A 329-amino-acid chain; its full sequence is GTPase Obg (329 aa).

Residues 1-159 (MQFIDQARIT…WFLQLELKLL (159 aa)) form the Obg domain. An OBG-type G domain is found at 160–328 (AEVGIIGLPN…LLAQVWKELG (169 aa)). Residues 166–173 (GLPNAGKS), 191–195 (FTTLV), 213–216 (DIPG), 280–283 (NKQE), and 309–311 (SAA) contribute to the ATP site. Residues serine 173 and threonine 193 each coordinate Mg(2+).

The protein belongs to the TRAFAC class OBG-HflX-like GTPase superfamily. OBG GTPase family. In terms of assembly, monomer. It depends on Mg(2+) as a cofactor.

The protein localises to the cytoplasm. In terms of biological role, an essential GTPase which binds GTP, GDP and possibly (p)ppGpp with moderate affinity, with high nucleotide exchange rates and a fairly low GTP hydrolysis rate. Plays a role in control of the cell cycle, stress response, ribosome biogenesis and in those bacteria that undergo differentiation, in morphogenesis control. The sequence is that of GTPase Obg from Prochlorococcus marinus (strain MIT 9303).